Here is a 515-residue protein sequence, read N- to C-terminus: Calcium-dependent protein kinase 2 (515 aa).

The disordered stretch occupies residues methionine 1–glycine 51. Glycine 2 carries N-myristoyl glycine lipidation. A compositionally biased stretch (low complexity) spans alanine 14–alanine 38. The Protein kinase domain maps to tyrosine 61–isoleucine 319. Residues leucine 67–threonine 75 and lysine 90 each bind ATP. Aspartate 185 (proton acceptor) is an active-site residue. The tract at residues alanine 325–isoleucine 355 is autoinhibitory domain. EF-hand domains are found at residues glutamate 362–lysine 397, leucine 398–methionine 433, aspartate 434–leucine 469, and aspartate 473–glutamate 504. Aspartate 375, aspartate 377, serine 379, threonine 381, glutamate 386, aspartate 411, aspartate 413, asparagine 415, threonine 417, glutamate 422, aspartate 447, aspartate 449, serine 451, cysteine 453, glutamate 458, aspartate 482, aspartate 484, aspartate 486, arginine 488, and glutamate 493 together coordinate Ca(2+).

The protein belongs to the protein kinase superfamily. Ser/Thr protein kinase family. CDPK subfamily. As to expression, expressed in heading panicles, spikelets and mature pollen grains.

It localises to the membrane. The catalysed reaction is L-seryl-[protein] + ATP = O-phospho-L-seryl-[protein] + ADP + H(+). The enzyme catalyses L-threonyl-[protein] + ATP = O-phospho-L-threonyl-[protein] + ADP + H(+). Its activity is regulated as follows. Activated by calcium. Autophosphorylation may play an important role in the regulation of the kinase activity. In terms of biological role, may play a role in signal transduction pathways that involve calcium as a second messenger. The chain is Calcium-dependent protein kinase 2 from Oryza sativa subsp. japonica (Rice).